The chain runs to 930 residues: MSKKRLYEIAKELGKESKEVVARAKELGLDVKSHSSSVEEAVAAKIAASFKPAAAPKVEAKPAAPKVSAEKKTEKSEPAKPAVAKEEAKPAEPVAPKTEKVAAKPQSRNFKAEREARAKEQAERRKQNKGNNRDQQQNGNRQKNDGRNGGKQGQSNRDNRRFNDQAKKQQGQQKRRNERRQQEDKRSNQAAPRIDFKARAAALKAEQNAEYARSSEERFKQYQAAKEALAQANKRKEPEEIFEEAAKLAEQAQQVQAVVEVVPEKKEPAVDTRRKKQARPDKNRDDYDHEEDGPRKQQKNRSSQNQVRNQKNSNWNNNKKNKKGNNKNNRNQTPKPVTERKFHELPTEFEYTDGMTVAEIAKRIKREPAEIVKKLFMMGVMATQNQSLDGETIELLMVDYGIEAKQKVEVDNADIERFFVEDGYLNEDELVERPPVVTIMGHVDHGKTTLLDTLRNSRVATGEAGGITQHIGAYQIVENGKKITFLDTPGHAAFTSMRARGASVTDITILVVAADDGVMPQTIEAINHSKAVNVPIIVAINKIDKPGANPERVIGELAEHGVMSTAWGGDSEFVEISAKFNQNIEELLETVLLVAEIQELKADPTVRAIGTVIEARLDKGKGAVATLLVQQGTLNVQDPIVVGNTFGRVRAMTNDLGRRVKVAGPSTPVSITGLNEAPMAGDHFAVYEDEKSARAAGEERAKRALMKQRQATQRVSLENLFDTLKAGELKSVNVIIKADVQGSVEALSASLQKIDVEGVKVTIVHSAVGAINESDVTLAEASNAFIVGFNVRPTPQARQQAEADDVEIRLHSIIYKVIEEMEEAMKGMLDPEFEEKVIGEAVIRETFKVSKVGTIGGFMVINGKVARDSKVRVIRDGVVIYDGELASLKHYKDDVKEVTNGREGGLMIDGYNDIKMDDVIEAYVMEEIKR.

Low complexity predominate over residues 50 to 67 (FKPAAAPKVEAKPAAPKV). Disordered regions lie at residues 50–195 (FKPA…PRID) and 260–346 (EVVP…HELP). Basic and acidic residues-rich tracts occupy residues 68 to 90 (SAEKKTEKSEPAKPAVAKEEAKP) and 110 to 125 (FKAEREARAKEQAERR). Residues 129–141 (KGNNRDQQQNGNR) show a composition bias toward low complexity. Basic and acidic residues-rich tracts occupy residues 157–167 (RDNRRFNDQAK) and 262–295 (VPEKKEPAVDTRRKKQARPDKNRDDYDHEEDGPR). Residues 309-318 (NQKNSNWNNN) are compositionally biased toward low complexity. Residues 337-346 (VTERKFHELP) show a composition bias toward basic and acidic residues. In terms of domain architecture, tr-type G spans 432–599 (ERPPVVTIMG…TVLLVAEIQE (168 aa)). A G1 region spans residues 441–448 (GHVDHGKT). Residue 441–448 (GHVDHGKT) participates in GTP binding. The G2 stretch occupies residues 466–470 (GITQH). A G3 region spans residues 487-490 (DTPG). GTP contacts are provided by residues 487 to 491 (DTPGH) and 541 to 544 (NKID). The interval 541–544 (NKID) is G4. The interval 577–579 (SAK) is G5.

It belongs to the TRAFAC class translation factor GTPase superfamily. Classic translation factor GTPase family. IF-2 subfamily.

It localises to the cytoplasm. In terms of biological role, one of the essential components for the initiation of protein synthesis. Protects formylmethionyl-tRNA from spontaneous hydrolysis and promotes its binding to the 30S ribosomal subunits. Also involved in the hydrolysis of GTP during the formation of the 70S ribosomal complex. The polypeptide is Translation initiation factor IF-2 (Streptococcus pneumoniae (strain Hungary19A-6)).